We begin with the raw amino-acid sequence, 262 residues long: MKPLKILISNDDGVFAEGIRTLAIAAASRGHEVTVVCPDQERSATGHGLTLQAPIRAERADELFNEGIQAWGCSGTPADCVKLALNELLKEKPDLILSGINHGPNLGTDIFCSGTVAAALEGTLEGIPSLAVSIASFQWRKFKLAGELALNIAENAINQKWPKKLLLNLNIPPCDSEQMGKPGWTRLSIRQYQEQFSKRKDPRGNAYYWLAGEAVKDLESAGDGPKEWPSDVSQIETNSPSLTPIQPDLFWRGNVNDLPKLN.

Residues aspartate 11, aspartate 12, serine 43, and asparagine 101 each contribute to the a divalent metal cation site. Residues 220–229 (SAGDGPKEWP) show a composition bias toward basic and acidic residues. The segment at 220 to 246 (SAGDGPKEWPSDVSQIETNSPSLTPIQ) is disordered. Polar residues predominate over residues 231–244 (DVSQIETNSPSLTP).

Belongs to the SurE nucleotidase family. Requires a divalent metal cation as cofactor.

The protein resides in the cytoplasm. The catalysed reaction is a ribonucleoside 5'-phosphate + H2O = a ribonucleoside + phosphate. Its function is as follows. Nucleotidase that shows phosphatase activity on nucleoside 5'-monophosphates. This Prochlorococcus marinus (strain SARG / CCMP1375 / SS120) protein is 5'-nucleotidase SurE.